The following is a 325-amino-acid chain: Tartrate-resistant acid phosphatase type 5 (325 aa).

A signal peptide spans 1–21 (MDTWTLLLVLHTSLLLPWAEG). N-linked (GlcNAc...) asparagine glycans are attached at residues asparagine 116 and asparagine 147.

In terms of assembly, exists either as monomer or, after proteolytic processing, as a dimer of two chains linked by disulfide bond(s). Fe cation serves as cofactor.

The protein localises to the lysosome. The enzyme catalyses a phosphate monoester + H2O = an alcohol + phosphate. This is Tartrate-resistant acid phosphatase type 5 (ACP5) from Oryctolagus cuniculus (Rabbit).